The primary structure comprises 950 residues: Glycine dehydrogenase (decarboxylating) (950 aa).

N6-(pyridoxal phosphate)lysine is present on Lys698.

The protein belongs to the GcvP family. In terms of assembly, the glycine cleavage system is composed of four proteins: P, T, L and H. The cofactor is pyridoxal 5'-phosphate.

It carries out the reaction N(6)-[(R)-lipoyl]-L-lysyl-[glycine-cleavage complex H protein] + glycine + H(+) = N(6)-[(R)-S(8)-aminomethyldihydrolipoyl]-L-lysyl-[glycine-cleavage complex H protein] + CO2. Its function is as follows. The glycine cleavage system catalyzes the degradation of glycine. The P protein binds the alpha-amino group of glycine through its pyridoxal phosphate cofactor; CO(2) is released and the remaining methylamine moiety is then transferred to the lipoamide cofactor of the H protein. The sequence is that of Glycine dehydrogenase (decarboxylating) from Neisseria gonorrhoeae (strain ATCC 700825 / FA 1090).